A 429-amino-acid polypeptide reads, in one-letter code: D-galactonate dehydratase family member Caci_4410 (429 aa).

The tract at residues 1 to 22 (MTDANHLLDPSGALPQTRPPWT) is disordered. Asp233 is a binding site for Mg(2+). His235 contacts D-arabinonate. 2 residues coordinate Mg(2+): Glu259 and Glu285. Positions 285, 306, 335, and 362 each coordinate D-arabinonate.

It belongs to the mandelate racemase/muconate lactonizing enzyme family. GalD subfamily.

Functionally, has no detectable activity with D-mannonate and with a panel of 70 other acid sugars (in vitro), in spite of the conservation of the residues that are expected to be important for catalytic activity and cofactor binding. May have evolved a divergent function. This chain is D-galactonate dehydratase family member Caci_4410, found in Catenulispora acidiphila (strain DSM 44928 / JCM 14897 / NBRC 102108 / NRRL B-24433 / ID139908).